The following is a 66-amino-acid chain: Alpha-like toxin BeM9 (66 aa).

One can recognise an LCN-type CS-alpha/beta domain in the interval 2 to 66 (RDAYIAKPHN…VPIRIPGKCH (65 aa)). 4 disulfides stabilise this stretch: C12–C65, C16–C38, C24–C48, and C28–C50.

Belongs to the long (4 C-C) scorpion toxin superfamily. Sodium channel inhibitor family. Alpha subfamily. In terms of tissue distribution, expressed by the venom gland.

Its subcellular location is the secreted. Functionally, alpha toxins bind voltage-independently at site-3 of sodium channels (Nav) and inhibit the inactivation of the activated channels, thereby blocking neuronal transmission. This toxin is active on both mammals and insects, since it inhibits inactivation of rNav1.4/SCN4A, hNav1.5/SCN5A, mNav1.6/SCN8A and insect BgNav1 and DmNav1 channels. In vivo, it shows paralytic activity in mice. The polypeptide is Alpha-like toxin BeM9 (Mesobuthus eupeus (Lesser Asian scorpion)).